Consider the following 123-residue polypeptide: Large ribosomal subunit protein uL14 (123 aa).

The protein belongs to the universal ribosomal protein uL14 family. In terms of assembly, part of the 50S ribosomal subunit. Forms a cluster with proteins L3 and L19. In the 70S ribosome, L14 and L19 interact and together make contacts with the 16S rRNA in bridges B5 and B8.

In terms of biological role, binds to 23S rRNA. Forms part of two intersubunit bridges in the 70S ribosome. The chain is Large ribosomal subunit protein uL14 from Cronobacter sakazakii (strain ATCC BAA-894) (Enterobacter sakazakii).